We begin with the raw amino-acid sequence, 124 residues long: Apolipoprotein C-IV (124 aa).

The N-terminal stretch at 1-27 is a signal peptide; it reads MLLPRRGLRTLPSLCLYILVLVWVVAC.

This sequence belongs to the apolipoprotein C4 family. In terms of processing, glycosylated; contains sialic acid. Present in up to five sialylated isoforms. As to expression, blood plasma, associated primarily with VLDL and HDL. Expressed mainly in the liver.

Its subcellular location is the secreted. Functionally, may participate in lipoprotein metabolism. The polypeptide is Apolipoprotein C-IV (APOC4) (Oryctolagus cuniculus (Rabbit)).